The primary structure comprises 502 residues: MSIRAEEISALIKQQIENYESQIQVSDVGTVIQIGDGIARAHGLDNVMSGELVEFANAVMGMALNLEENNVGIVILGPYTGIKEGDEVRRTGRIMEVPVGEALIGRVVNPLGQPVDGLGPVETTETRPIESPAPGVMDRRSVHEPLQTGIKAIDALVPIGRGQRELIIGDRQTGKTSVAIDTIINQKDQNMICIYVAIGQKESTVRTVVETLRKHGALDYTIVVTASASQPAPLLFLAPYAGVAMGEYFMYKGQHVLVVYDDLSKQAAAYRELSLFVRRPPGREAYPGDIFYLHSRLLERAAKLSDAKGGGSLTALPFVETQAGDISAYIPTNVISITDGQIFLQSDLFFSRVRPAINAGLSVSRVGGAAQIKAMKKVAGTLRLDLAAYRELEAFAQFGSDLDKATQAKLARGARTVEVLKQDLHQPIPVEKQVLIIYALTRGFLDDIPVKDVRRFEKEFYLWLDQNGQHLLEHIRTTKDLPNEDDLNQAIEAFKKTFVVSQ.

The tract at residues 115–137 (VDGLGPVETTETRPIESPAPGVM) is disordered. 169 to 176 (GDRQTGKT) is a binding site for ATP.

This sequence belongs to the ATPase alpha/beta chains family. As to quaternary structure, F-type ATPases have 2 components, CF(1) - the catalytic core - and CF(0) - the membrane proton channel. CF(1) has five subunits: alpha(3), beta(3), gamma(1), delta(1), epsilon(1). CF(0) has three main subunits: a(1), b(2) and c(9-12). The alpha and beta chains form an alternating ring which encloses part of the gamma chain. CF(1) is attached to CF(0) by a central stalk formed by the gamma and epsilon chains, while a peripheral stalk is formed by the delta and b chains.

It localises to the cell membrane. It carries out the reaction ATP + H2O + 4 H(+)(in) = ADP + phosphate + 5 H(+)(out). Produces ATP from ADP in the presence of a proton gradient across the membrane. The alpha chain is a regulatory subunit. The chain is ATP synthase subunit alpha from Geobacillus stearothermophilus (Bacillus stearothermophilus).